The primary structure comprises 157 residues: Protein MGF 110-13L (157 aa).

2 consecutive transmembrane segments (helical) span residues 14–34 (QYCL…CALC) and 39–59 (LSTT…AQPV).

It belongs to the asfivirus MGF 110 family.

It is found in the host membrane. In terms of biological role, plays a role in virus cell tropism, and may be required for efficient virus replication in macrophages. The chain is Protein MGF 110-13L from African swine fever virus (isolate Tick/Malawi/Lil 20-1/1983) (ASFV).